A 134-amino-acid chain; its full sequence is Small ribosomal subunit protein uS8 (134 aa).

Belongs to the universal ribosomal protein uS8 family. As to quaternary structure, part of the 30S ribosomal subunit. Contacts proteins S5 and S12.

Functionally, one of the primary rRNA binding proteins, it binds directly to 16S rRNA central domain where it helps coordinate assembly of the platform of the 30S subunit. The chain is Small ribosomal subunit protein uS8 from Sphingopyxis alaskensis (strain DSM 13593 / LMG 18877 / RB2256) (Sphingomonas alaskensis).